The following is a 476-amino-acid chain: GTPase Der (476 aa).

2 consecutive EngA-type G domains span residues Phe-3 to Met-167 and Leu-205 to Asn-380. GTP is bound by residues Gly-9 to Ser-16, Asp-56 to Leu-60, Asn-119 to Glu-122, Gly-211 to Ser-218, Asp-258 to Met-262, and Asn-323 to Asp-326. The KH-like domain occupies Arg-381–Asp-465.

It belongs to the TRAFAC class TrmE-Era-EngA-EngB-Septin-like GTPase superfamily. EngA (Der) GTPase family. As to quaternary structure, associates with the 50S ribosomal subunit.

Its function is as follows. GTPase that plays an essential role in the late steps of ribosome biogenesis. The sequence is that of GTPase Der from Agrobacterium fabrum (strain C58 / ATCC 33970) (Agrobacterium tumefaciens (strain C58)).